The sequence spans 83 residues: Sec-independent protein translocase protein TatA (83 aa).

The helical transmembrane segment at 1-21 (MGSLSPWHWAILAVVVIVLFG) threads the bilayer. The interval 48 to 83 (NENKAEASIETPTPVQSQRVDPSAASGQDSTEARPA) is disordered. Residues 57-77 (ETPTPVQSQRVDPSAASGQDS) are compositionally biased toward polar residues.

The protein belongs to the TatA/E family. The Tat system comprises two distinct complexes: a TatABC complex, containing multiple copies of TatA, TatB and TatC subunits, and a separate TatA complex, containing only TatA subunits. Substrates initially bind to the TatABC complex, which probably triggers association of the separate TatA complex to form the active translocon.

It localises to the cell membrane. Part of the twin-arginine translocation (Tat) system that transports large folded proteins containing a characteristic twin-arginine motif in their signal peptide across membranes. TatA could form the protein-conducting channel of the Tat system. This Mycobacterium bovis (strain BCG / Pasteur 1173P2) protein is Sec-independent protein translocase protein TatA.